The chain runs to 228 residues: Phosphatidylglycerophosphate phosphatase PTPMT2 (228 aa).

The segment covering 1–10 has biased composition (acidic residues); sequence MTDETEEDDT. The disordered stretch occupies residues 1–30; sequence MTDETEEDDTTQQRSSRNDGVSKNKGKGFK. Residues Y48 and D126 each coordinate substrate. The 148-residue stretch at 66 to 213 folds into the Tyrosine-protein phosphatase domain; it reads WWDQIDEYLL…VEEFSRLQSP (148 aa). The Phosphocysteine intermediate role is filled by C157. The short motif at 157-163 is the Glucan phosphatase signature motif CXAGXGR element; the sequence is CKAGRGR. 158-163 is a binding site for substrate; sequence KAGRGR.

This sequence belongs to the protein-tyrosine phosphatase family. Non-receptor class dual specificity subfamily. In terms of tissue distribution, expressed in roots, leaves, stems and flowers. As to expression, expressed at low levels in stems and flowers.

The enzyme catalyses O-phospho-L-seryl-[protein] + H2O = L-seryl-[protein] + phosphate. It carries out the reaction O-phospho-L-threonyl-[protein] + H2O = L-threonyl-[protein] + phosphate. It catalyses the reaction O-phospho-L-tyrosyl-[protein] + H2O = L-tyrosyl-[protein] + phosphate. The catalysed reaction is a 1,2-diacyl-sn-glycero-3-phospho-(1'-sn-glycero-3'-phosphate) + H2O = a 1,2-diacyl-sn-glycero-3-phospho-(1'-sn-glycerol) + phosphate. Its pathway is phospholipid metabolism; phosphatidylglycerol biosynthesis; phosphatidylglycerol from CDP-diacylglycerol: step 2/2. Exhibits phosphatidylglycerophosphate phosphatase activity. Involved in root growth and columella cells organization. May possess protein phosphatase activity. The chain is Phosphatidylglycerophosphate phosphatase PTPMT2 from Arabidopsis thaliana (Mouse-ear cress).